A 350-amino-acid chain; its full sequence is MTKHYLNSKYQSEQRSSAMKKITMGTASIILGSLVYIGADSQQVNAATEATNATNNQSTQVSQATSQPINFQVQKDGSSEKSHMDDYMQHPGKVIKQNNKYYFQTVLNNASFWKEYKFYNANNQELATTVVNDNKKADTRTINVAVEPGYKSLTTKVHIVVPQINYNHRYTTHLEFEKAIPTLADAAKPNNVKPVQPKPAQPKTPTEQTKPVQPKVEKVKPTVTTTSKVEDNHSTKVVSTDTTKDQTKTQTAHTVKTAQTAQEQNKVQTPVKDVATAKSESNNQAVSDNKSQQTNKVTKHNETPKQASKAKELPKTGLTSVDNFISTVAFATLALLGSLSLLLFKRKESK.

Residues 1–46 form the signal peptide; the sequence is MTKHYLNSKYQSEQRSSAMKKITMGTASIILGSLVYIGADSQQVNA. Residues 62 to 184 enclose the NEAT domain; that stretch reads SQATSQPINF…EFEKAIPTLA (123 aa). 3 residues coordinate heme: K75, S82, and Y166. The interval 188 to 314 is disordered; the sequence is KPNNVKPVQP…KQASKAKELP (127 aa). A compositionally biased stretch (low complexity) spans 203 to 214; sequence KTPTEQTKPVQP. Composition is skewed to polar residues over residues 252–268 and 278–296; these read AHTV…NKVQ and KSES…QTNK. The segment covering 299–314 has biased composition (basic and acidic residues); it reads KHNETPKQASKAKELP. The LPXTG sorting signal signature appears at 313–317; it reads LPKTG. T316 bears the Pentaglycyl murein peptidoglycan amidated threonine mark. The propeptide at 317–350 is removed by sortase A; it reads GLTSVDNFISTVAFATLALLGSLSLLLFKRKESK.

The protein belongs to the IsdA family. Monomer. Interacts with IsdC. Interacts with IsdB.

The protein resides in the secreted. Its subcellular location is the cell wall. In terms of biological role, cell wall-anchored surface receptor that participates in the extraction of heme from oxidized methemoglobin/metHb to enable growth on hemoglobin as a sole iron source. Receives heme from IsdB and transfers it to IsdC. Also plays a role in the inhibition of host immune response. Protects S.aureus against the bactericidal protease activity of apolactoferrin. Decreases bacterial cellular hydrophobicity, which renders S.aureus resistant to bactericidal human skin fatty acids as well as to beta-defensins and cathelicidin. Also binds fibronectin and chains B-beta and gamma of fibrinogen, promoting clumping of S.aureus with fibrinogen. Involved in adherence of S.aureus to human desquamated nasal epithelial cells and is required for nasal colonization. The polypeptide is Iron-regulated surface determinant protein A (isdA) (Staphylococcus aureus (strain Mu3 / ATCC 700698)).